The following is a 147-amino-acid chain: Ponticulin-like protein C3 (147 aa).

A signal peptide spans 1–20; it reads MKFTKSLLLLIVAVFASSNA. The GPI-like-anchor amidated asparagine moiety is linked to residue Asn-118. Asn-118 is a glycosylation site (N-linked (GlcNAc...) asparagine). A propeptide spans 119 to 147 (removed in mature form); that stretch reads SSESDSSDSTRIGASFALFALALLSMLAL.

Belongs to the ponticulin family. The GPI-like-anchor contains a phosphoceramide group, rather than a phosphatidyl group.

The protein localises to the cell membrane. This is Ponticulin-like protein C3 (ponC3) from Dictyostelium discoideum (Social amoeba).